Consider the following 180-residue polypeptide: MPENKIRSTTILCVRKSGKVAIGGDGQVSMGNTVMKNTAKKIRRLYDGKILSGFAGSAADAFTLFELFEKKVQEFGGSLSRSAVELAREWRTDRMLRKLEALLIVADKEESFLISGTGDVISPDEGVIAIGSGGSYALAAAKALYDHTDLSAREIVESSMKIAANICIYTNDHITLEEIL.

T9 is a catalytic residue. Na(+) contacts are provided by A164, C167, and T170.

The protein belongs to the peptidase T1B family. HslV subfamily. In terms of assembly, a double ring-shaped homohexamer of HslV is capped on each side by a ring-shaped HslU homohexamer. The assembly of the HslU/HslV complex is dependent on binding of ATP.

It localises to the cytoplasm. It catalyses the reaction ATP-dependent cleavage of peptide bonds with broad specificity.. Allosterically activated by HslU binding. Functionally, protease subunit of a proteasome-like degradation complex believed to be a general protein degrading machinery. In Leptospira borgpetersenii serovar Hardjo-bovis (strain JB197), this protein is ATP-dependent protease subunit HslV.